The primary structure comprises 82 residues: Sec-independent protein translocase protein TatA (82 aa).

Residues 1–21 (MGSLSIWHWLIVGAVVLLVFG) form a helical membrane-spanning segment. Positions 43–82 (GLSEDEEKAEAKPVGEPSLRSLDHQGAGDPLKTPDARKIG) are disordered.

It belongs to the TatA/E family. As to quaternary structure, the Tat system comprises two distinct complexes: a TatABC complex, containing multiple copies of TatA, TatB and TatC subunits, and a separate TatA complex, containing only TatA subunits. Substrates initially bind to the TatABC complex, which probably triggers association of the separate TatA complex to form the active translocon.

The protein resides in the cell inner membrane. Its function is as follows. Part of the twin-arginine translocation (Tat) system that transports large folded proteins containing a characteristic twin-arginine motif in their signal peptide across membranes. TatA could form the protein-conducting channel of the Tat system. The polypeptide is Sec-independent protein translocase protein TatA (Methylocella silvestris (strain DSM 15510 / CIP 108128 / LMG 27833 / NCIMB 13906 / BL2)).